The sequence spans 1396 residues: Sterol 3-beta-glucosyltransferase (1396 aa).

The span at 1–16 (MRPFIDDAKRRAERRL) shows a compositional bias: basic and acidic residues. Disordered regions lie at residues 1 to 21 (MRPF…ASRQ), 40 to 64 (DADD…MQYM), 83 to 196 (ARFD…RAAP), and 209 to 232 (ETEN…KKSQ). The segment covering 94 to 107 (ETRTRPRFLSEKPF) has biased composition (basic and acidic residues). Residues 186 to 196 (RPRSATPRAAP) show a composition bias toward low complexity. One can recognise a GRAM 1 domain in the interval 238-273 (RQLMEMFRFPTPEKVVVEYACSLLQSMLLQGYMYVT). In terms of domain architecture, PH spans 289–388 (RVIKSGYIYK…WVRALQKVIF (100 aa)). 2 disordered regions span residues 460-532 (GTPT…SSSS) and 571-627 (TIHT…ESKD). 2 stretches are compositionally biased toward polar residues: residues 484–532 (GSQN…SSSS) and 571–584 (TIHT…GTAR). Over residues 588–602 (RHSDEITRSTTEHGL) the composition is skewed to basic and acidic residues. The region spanning 717-783 (ERFRAHFALP…HDIENVEKEK (67 aa)) is the GRAM 2 domain. UDP-alpha-D-glucose is bound by residues Ser-905, Arg-906, Asp-908, Ala-1208, His-1210, His-1223, Gly-1227, Thr-1228, Asp-1247, and Gln-1248. The span at 1324–1343 (SSISSTPFSPTPSTKTSDDQ) shows a compositional bias: low complexity. Residues 1324–1346 (SSISSTPFSPTPSTKTSDDQNAN) are disordered.

Belongs to the glycosyltransferase 28 family.

The protein resides in the cytoplasm. It is found in the preautophagosomal structure membrane. The catalysed reaction is a sterol + UDP-alpha-D-glucose = a sterol 3-beta-D-glucoside + UDP + H(+). It catalyses the reaction ergosterol + UDP-alpha-D-glucose = ergosteryl 3-beta-D-glucoside + UDP + H(+). Sterol glycosyltransferase responsible for the glycosylation of ergosterol to form ergosterol-glucoside. The chain is Sterol 3-beta-glucosyltransferase from Emericella nidulans (strain FGSC A4 / ATCC 38163 / CBS 112.46 / NRRL 194 / M139) (Aspergillus nidulans).